A 199-amino-acid chain; its full sequence is MKFSPLVDELIQSLRCLPGVGPKSAQRMAFQLLERDRKAGHKLAQALSSAMSDVGHCSSCRTFTEESLCPICASSRRGNSDLICVVETPADVLAIEAGGHFSGRYFVLLGHLSPLDGVGPDELGLSLLETHLASGEVSELILATNPTVEGDATAHFIADMAKQHEVNVSRIAHGVPVGGELEYVDSTTLALSFNGRIPL.

The C4-type zinc-finger motif lies at 57–72 (CSSCRTFTEESLCPIC). Residues 81 to 176 (DLICVVETPA…NVSRIAHGVP (96 aa)) form the Toprim domain.

It belongs to the RecR family.

Its function is as follows. May play a role in DNA repair. It seems to be involved in an RecBC-independent recombinational process of DNA repair. It may act with RecF and RecO. This chain is Recombination protein RecR, found in Shewanella loihica (strain ATCC BAA-1088 / PV-4).